A 215-amino-acid polypeptide reads, in one-letter code: L-fuculose phosphate aldolase (215 aa).

Residues Gly28–Asn29, Thr43–Gly44, and Ser71–Ser72 each bind substrate. Glu73 (proton donor/acceptor) is an active-site residue. Glu73, His92, His94, and His155 together coordinate Zn(2+).

It belongs to the aldolase class II family. AraD/FucA subfamily. As to quaternary structure, homotetramer. Zn(2+) serves as cofactor.

The enzyme catalyses L-fuculose 1-phosphate = (S)-lactaldehyde + dihydroxyacetone phosphate. It participates in carbohydrate degradation; L-fucose degradation; L-lactaldehyde and glycerone phosphate from L-fucose: step 3/3. Functionally, involved in the degradation of L-fucose and D-arabinose. Catalyzes the reversible cleavage of L-fuculose 1-phosphate (Fuc1P) to yield dihydroxyacetone phosphate (DHAP) and L-lactaldehyde. In Escherichia coli O6:H1 (strain CFT073 / ATCC 700928 / UPEC), this protein is L-fuculose phosphate aldolase.